Here is a 291-residue protein sequence, read N- to C-terminus: Protein ZAR1-like (291 aa).

Residues 103 to 152 (GSQTLHSSSLSDRTSSRKPTEAWEVGRRALIRRPQDGEDEESQEELTGPT) form a disordered region. Residues 106–115 (TLHSSSLSDR) are compositionally biased toward low complexity. Residues 116 to 129 (TSSRKPTEAWEVGR) show a composition bias toward basic and acidic residues. The 3CxxC-type zinc-finger motif lies at 195–280 (LKYGYFHCKD…QELCGHCKDK (86 aa)).

This sequence belongs to the ZAR1 family. In terms of assembly, interacts with YBX2. Expressed in oocytes and zygotes. Predominantly expressed in maturing oocytes before maternal-to-zygotic transition (MZT). Less abundant than Zar1.

It localises to the cytoplasm. Its subcellular location is the cytoplasmic ribonucleoprotein granule. In terms of biological role, mRNA-binding protein required for maternal mRNA storage, translation and degradation during oocyte maturation. Probably promotes formation of some phase-separated membraneless compartment that stores maternal mRNAs in oocytes: acts by undergoing liquid-liquid phase separation upon binding to maternal mRNAs. Binds to the 3'-UTR of maternal mRNAs, inhibiting their translation. This Mus musculus (Mouse) protein is Protein ZAR1-like.